The primary structure comprises 37 residues: NADH dehydrogenase [ubiquinone] 1 alpha subcomplex subunit 5 (37 aa).

It belongs to the complex I NDUFA5 subunit family. In terms of assembly, complex I is composed of about 45 different subunits.

It localises to the mitochondrion inner membrane. Its function is as follows. Accessory subunit of the mitochondrial membrane respiratory chain NADH dehydrogenase (Complex I), that is believed not to be involved in catalysis. Complex I functions in the transfer of electrons from NADH to the respiratory chain. The immediate electron acceptor for the enzyme is believed to be ubiquinone. The sequence is that of NADH dehydrogenase [ubiquinone] 1 alpha subcomplex subunit 5 from Solanum tuberosum (Potato).